An 876-amino-acid polypeptide reads, in one-letter code: Alanine--tRNA ligase (876 aa).

The Zn(2+) site is built by H563, H567, C665, and H669.

This sequence belongs to the class-II aminoacyl-tRNA synthetase family. It depends on Zn(2+) as a cofactor.

It is found in the cytoplasm. It catalyses the reaction tRNA(Ala) + L-alanine + ATP = L-alanyl-tRNA(Ala) + AMP + diphosphate. In terms of biological role, catalyzes the attachment of alanine to tRNA(Ala) in a two-step reaction: alanine is first activated by ATP to form Ala-AMP and then transferred to the acceptor end of tRNA(Ala). Also edits incorrectly charged Ser-tRNA(Ala) and Gly-tRNA(Ala) via its editing domain. The sequence is that of Alanine--tRNA ligase from Shouchella clausii (strain KSM-K16) (Alkalihalobacillus clausii).